The sequence spans 159 residues: Na(+)/H(+) antiporter subunit E1 (159 aa).

4 consecutive transmembrane segments (helical) span residues 1–21 (MAIQFVINLLVSVIWLLVTNS), 27–47 (FVLGFILGLFLVYLLHRVLPG), 60–80 (LIITFLTELIKANFGVLKIIL), and 101–121 (WQLVLLSNLITLTPGTVVLGI).

This sequence belongs to the CPA3 antiporters (TC 2.A.63) subunit E family. May form a heterooligomeric complex that consists of seven subunits: mnhA1, mnhB1, mnhC1, mnhD1, mnhE1, mnhF1 and mnhG1.

It localises to the cell membrane. Its function is as follows. Mnh complex is a Na(+)/H(+) antiporter involved in Na(+) excretion. This Staphylococcus epidermidis (strain ATCC 35984 / DSM 28319 / BCRC 17069 / CCUG 31568 / BM 3577 / RP62A) protein is Na(+)/H(+) antiporter subunit E1 (mnhE1).